The following is a 123-amino-acid chain: Large ribosomal subunit protein bL17 (123 aa).

It belongs to the bacterial ribosomal protein bL17 family. As to quaternary structure, part of the 50S ribosomal subunit. Contacts protein L32.

The protein is Large ribosomal subunit protein bL17 of Staphylococcus haemolyticus (strain JCSC1435).